The primary structure comprises 341 residues: UDP-N-acetylenolpyruvoylglucosamine reductase (341 aa).

One can recognise an FAD-binding PCMH-type domain in the interval 12-182 (LSAYAKRLDI…ISVGLLLKKN (171 aa)). R158 is a catalytic residue. S228 acts as the Proton donor in catalysis. The active site involves E324.

This sequence belongs to the MurB family. It depends on FAD as a cofactor.

The protein localises to the cytoplasm. The catalysed reaction is UDP-N-acetyl-alpha-D-muramate + NADP(+) = UDP-N-acetyl-3-O-(1-carboxyvinyl)-alpha-D-glucosamine + NADPH + H(+). Its pathway is cell wall biogenesis; peptidoglycan biosynthesis. Cell wall formation. The chain is UDP-N-acetylenolpyruvoylglucosamine reductase from Photorhabdus laumondii subsp. laumondii (strain DSM 15139 / CIP 105565 / TT01) (Photorhabdus luminescens subsp. laumondii).